The primary structure comprises 205 residues: 3-demethoxyubiquinol 3-hydroxylase (205 aa).

Residues Glu-54, Glu-84, His-87, Glu-136, Glu-168, and His-171 each contribute to the Fe cation site.

Belongs to the COQ7 family. Fe cation is required as a cofactor.

It is found in the cell membrane. It catalyses the reaction a 5-methoxy-2-methyl-3-(all-trans-polyprenyl)benzene-1,4-diol + AH2 + O2 = a 3-demethylubiquinol + A + H2O. Its pathway is cofactor biosynthesis; ubiquinone biosynthesis. Catalyzes the hydroxylation of 2-nonaprenyl-3-methyl-6-methoxy-1,4-benzoquinol during ubiquinone biosynthesis. The polypeptide is 3-demethoxyubiquinol 3-hydroxylase (Acidovorax sp. (strain JS42)).